Reading from the N-terminus, the 256-residue chain is Cysteine-rich repeat secretory protein 42 (256 aa).

Positions 1-26 (MSSVFGSVHILAMIAIQLLLTHSVSS) are cleaved as a signal peptide. Gnk2-homologous domains lie at 33–136 (YLHH…SVAS) and 142–253 (YEND…LYPF).

It belongs to the cysteine-rich repeat secretory protein family.

It is found in the secreted. The sequence is that of Cysteine-rich repeat secretory protein 42 (CRRSP42) from Arabidopsis thaliana (Mouse-ear cress).